Consider the following 332-residue polypeptide: Geranylgeranyl pyrophosphate synthase dpasD (332 aa).

Lysine 55, arginine 58, and histidine 87 together coordinate isopentenyl diphosphate. Aspartate 94 and aspartate 98 together coordinate Mg(2+). Arginine 103 lines the dimethylallyl diphosphate pocket. Position 104 (arginine 104) interacts with isopentenyl diphosphate. Dimethylallyl diphosphate contacts are provided by lysine 181, threonine 182, and glutamine 215. Aspartate 218 lines the Mg(2+) pocket. Residues asparagine 222, lysine 232, and lysine 242 each coordinate dimethylallyl diphosphate.

The protein belongs to the FPP/GGPP synthase family. Mg(2+) serves as cofactor.

The enzyme catalyses isopentenyl diphosphate + dimethylallyl diphosphate = (2E)-geranyl diphosphate + diphosphate. The catalysed reaction is isopentenyl diphosphate + (2E)-geranyl diphosphate = (2E,6E)-farnesyl diphosphate + diphosphate. It catalyses the reaction isopentenyl diphosphate + (2E,6E)-farnesyl diphosphate = (2E,6E,10E)-geranylgeranyl diphosphate + diphosphate. The protein operates within secondary metabolite biosynthesis; terpenoid biosynthesis. Functionally, geranylgeranyl pyrophosphate synthase; part of the gene cluster that mediates the biosynthesis of the diterpenoid pyrones subglutinols A and B. The first step of the pathway is the synthesis of the alpha-pyrone moiety by the polyketide synthase dpasA via condensation of one acetyl-CoA starter unit with 3 malonyl-CoA units and 2 methylations. The alpha-pyrone is then combined with geranylgeranyl pyrophosphate (GGPP) formed by the GGPP synthase dpasD through the action of the prenyltransferase dpasC to yield a linear alpha-pyrone diterpenoid. Subsequent steps in the diterpenoid pyrone biosynthetic pathway involve the decalin core formation, which is initiated by the epoxidation of the C10-C11 olefin by the FAD-dependent oxidoreductase dpasE, and is followed by a cyclization cascade catalyzed by the terpene cyclase dpasB. The FAD-linked oxidoreductase dpasF is then involved in tetrahydrofuran (THF) ring formation at the C5 unit to complete the formation of subglutinols A and B. DpasF also possesses an additional catalytic ability of multi-step oxidations to generate a new DDP analog with an enone system at the C5 named FDDP A. In Apiospora sacchari (Arthrinium sacchari), this protein is Geranylgeranyl pyrophosphate synthase dpasD.